The following is a 238-amino-acid chain: Formate dehydrogenase, cytochrome b556 subunit (238 aa).

Positions 23 and 62 each coordinate heme b. The next 4 membrane-spanning stretches (helical) occupy residues 23-43 (HWML…FFFP), 60-80 (AIHP…ALLY), 120-140 (MLFW…IIMW), and 155-175 (IAIL…LVHI). Residues H160 and H174 each coordinate heme b.

Belongs to the formate dehydrogenase gamma subunit family. As to quaternary structure, formate dehydrogenase is a membrane-bound complex, formed by subunits alpha, beta and gamma. Requires heme as cofactor.

The protein localises to the cell membrane. Its function is as follows. Allows to use formate as major electron donor during anaerobic respiration. Subunit gamma is probably the cytochrome b556(FDO) component of the formate dehydrogenase. This Haemophilus influenzae (strain ATCC 51907 / DSM 11121 / KW20 / Rd) protein is Formate dehydrogenase, cytochrome b556 subunit (fdxI).